The primary structure comprises 361 residues: Peptide chain release factor 1 (361 aa).

Residue Gln-235 is modified to N5-methylglutamine.

The protein belongs to the prokaryotic/mitochondrial release factor family. Methylated by PrmC. Methylation increases the termination efficiency of RF1.

It is found in the cytoplasm. In terms of biological role, peptide chain release factor 1 directs the termination of translation in response to the peptide chain termination codons UAG and UAA. The polypeptide is Peptide chain release factor 1 (Xanthomonas euvesicatoria pv. vesicatoria (strain 85-10) (Xanthomonas campestris pv. vesicatoria)).